A 785-amino-acid polypeptide reads, in one-letter code: Endonuclease MutS2 (785 aa).

Position 335–342 (335–342) interacts with ATP; the sequence is GPNTGGKT. Positions 710-785 constitute a Smr domain; it reads LDLRGERYED…GNGVTIVEFK (76 aa).

This sequence belongs to the DNA mismatch repair MutS family. MutS2 subfamily. In terms of assembly, homodimer. Binds to stalled ribosomes, contacting rRNA.

Its function is as follows. Endonuclease that is involved in the suppression of homologous recombination and thus may have a key role in the control of bacterial genetic diversity. In terms of biological role, acts as a ribosome collision sensor, splitting the ribosome into its 2 subunits. Detects stalled/collided 70S ribosomes which it binds and splits by an ATP-hydrolysis driven conformational change. Acts upstream of the ribosome quality control system (RQC), a ribosome-associated complex that mediates the extraction of incompletely synthesized nascent chains from stalled ribosomes and their subsequent degradation. Probably generates substrates for RQC. In Listeria monocytogenes serovar 1/2a (strain ATCC BAA-679 / EGD-e), this protein is Endonuclease MutS2.